A 1343-amino-acid polypeptide reads, in one-letter code: Protein cordon-bleu (1343 aa).

Disordered regions lie at residues Met1–Lys51, Lys301–Glu479, Val522–Glu613, Ile733–Leu808, Glu1056–Asp1077, and Ile1105–Gly1148. Positions Ala20–Ala30 are enriched in pro residues. Positions Lys305–Pro310 match the KKRRAP 1 motif. The span at Ser324–Asn335 shows a compositional bias: polar residues. Positions Lys338 to Pro343 match the KKRRAP 2 motif. Residues Pro343–Pro354 show a composition bias toward pro residues. The span at Asp390–Pro400 shows a compositional bias: basic and acidic residues. The span at Ser406–Ser422 shows a compositional bias: low complexity. The span at Pro445 to Ser460 shows a compositional bias: basic and acidic residues. Residues Glu552 to Val573 show a composition bias toward polar residues. Over residues Pro746–Glu757 the composition is skewed to basic and acidic residues. Positions Val773–Phe789 are enriched in polar residues. Over residues Ile1105–Thr1122 the composition is skewed to polar residues. Over residues Lys1128–Ile1137 the composition is skewed to basic and acidic residues. 2 consecutive WH2 domains span residues Ile1167–Val1187 and Glu1207–Thr1227. Positions Asn1246–Ala1297 are disordered. Over residues Phe1261–Gly1292 the composition is skewed to pro residues. One can recognise a WH2 3 domain in the interval Ala1297–Val1317.

In terms of assembly, interacts with pacsin1.

The protein localises to the cell membrane. It localises to the cytoplasm. It is found in the cytoskeleton. The protein resides in the cell projection. Its subcellular location is the ruffle. The protein localises to the cytosol. Functionally, plays an important role in the reorganization of the actin cytoskeleton. Binds to and sequesters actin monomers (G actin). Nucleates actin polymerization by assembling three actin monomers in cross-filament orientation and thereby promotes growth of actin filaments at the barbed end. Can also mediate actin depolymerization at barbed ends and severing of actin filaments. Promotes formation of cell ruffles. Regulates neuron morphogenesis and increases branching of axons and dendrites. Required for normal embryonic development, including normal development of laterality, normal body size and shape, as well as normal brain, heart and kidney development. Required for normal development of stereocilia and kinocilia in sensory hair cells of neuromasts in the posterior lateral line organ, and thus also for balance keeping and normal swimming behavior. This is Protein cordon-bleu (cobl) from Danio rerio (Zebrafish).